The sequence spans 297 residues: Probable transcription factor vicR (297 aa).

Disordered regions lie at residues 45–80 (LPGL…HSET) and 100–134 (TNQA…KNVH). The segment covering 58–67 (QKEEMRRKNA) has biased composition (basic and acidic residues). The segment covering 69–80 (AQMQNDSNHSET) has biased composition (polar residues). The span at 110–124 (RSREDITNSRAERHS) shows a compositional bias: basic and acidic residues.

It localises to the nucleus. Its function is as follows. Probable transcription factor; part of the gene cluster that mediates the biosynthesis of the secondary metabolite victorin, the molecular basis for Victoria blight of oats. May play a role in the regulation of the production of victorin. The polypeptide is Probable transcription factor vicR (Bipolaris victoriae (strain FI3) (Victoria blight of oats agent)).